The following is a 317-amino-acid chain: Acetyl-coenzyme A carboxylase carboxyl transferase subunit alpha (317 aa).

The CoA carboxyltransferase C-terminal domain maps to 39-293 (RLESKAAAAL…GDALAEALTG (255 aa)).

Belongs to the AccA family. As to quaternary structure, acetyl-CoA carboxylase is a heterohexamer composed of biotin carboxyl carrier protein (AccB), biotin carboxylase (AccC) and two subunits each of ACCase subunit alpha (AccA) and ACCase subunit beta (AccD).

The protein localises to the cytoplasm. The catalysed reaction is N(6)-carboxybiotinyl-L-lysyl-[protein] + acetyl-CoA = N(6)-biotinyl-L-lysyl-[protein] + malonyl-CoA. It functions in the pathway lipid metabolism; malonyl-CoA biosynthesis; malonyl-CoA from acetyl-CoA: step 1/1. Its function is as follows. Component of the acetyl coenzyme A carboxylase (ACC) complex. First, biotin carboxylase catalyzes the carboxylation of biotin on its carrier protein (BCCP) and then the CO(2) group is transferred by the carboxyltransferase to acetyl-CoA to form malonyl-CoA. The chain is Acetyl-coenzyme A carboxylase carboxyl transferase subunit alpha from Methylobacterium nodulans (strain LMG 21967 / CNCM I-2342 / ORS 2060).